Consider the following 398-residue polypeptide: Candidapepsin-3 (398 aa).

The N-terminal stretch at M1–A18 is a signal peptide. Residues T19–R58 constitute a propeptide, activation peptide. The N-linked (GlcNAc...) asparagine glycan is linked to N42. The Peptidase A1 domain maps to Y72 to A384. Residue D90 is part of the active site. D90 to G92 contributes to the pepstatin A binding site. Positions V103–D112 are enriched in polar residues. The disordered stretch occupies residues V103–I139. C105 and C116 are oxidised to a cystine. The span at S123–S138 shows a compositional bias: low complexity. Residues E140–D143 and D274–T278 each bind pepstatin A. D274 is a catalytic residue. C312 and C350 are oxidised to a cystine. The N-linked (GlcNAc...) asparagine glycan is linked to N313.

This sequence belongs to the peptidase A1 family. Post-translationally, O-glycosylated.

It localises to the secreted. The enzyme catalyses Preferential cleavage at the carboxyl of hydrophobic amino acids, but fails to cleave 15-Leu-|-Tyr-16, 16-Tyr-|-Leu-17 and 24-Phe-|-Phe-25 of insulin B chain. Activates trypsinogen, and degrades keratin.. The chain is Candidapepsin-3 (SAP3) from Candida albicans (strain WO-1) (Yeast).